A 79-amino-acid chain; its full sequence is Defensin-like protein 109 (79 aa).

The signal sequence occupies residues 1-24 (MDFTKKILVVFAFTIMLGISSVHC). Cystine bridges form between C41-C76, C47-C68, C54-C74, and C58-C75.

This sequence belongs to the DEFL family.

Its subcellular location is the secreted. The chain is Defensin-like protein 109 from Arabidopsis thaliana (Mouse-ear cress).